A 164-amino-acid polypeptide reads, in one-letter code: LWamide neuropeptides (164 aa).

Residues 1–6 constitute a propeptide that is removed on maturation; sequence RSADAQ. Residues 1-92 form a disordered region; it reads RSADAQQHGL…WGRSADAQQP (92 aa). W11 and W20 each carry tryptophan amide. The propeptide occupies 23-27; it reads SADAQ. 2 positions are modified to tryptophan amide: W32 and W41. Residues 44-49 constitute a propeptide that is removed on maturation; the sequence is SAEPGQ. Tryptophan amide occurs at positions 53 and 62. A propeptide spanning residues 65–70 is cleaved from the precursor; that stretch reads SAEPLQ. Tryptophan amide is present on residues W74 and W83. A propeptide spanning residues 86 to 90 is cleaved from the precursor; that stretch reads SADAQ. Residues W95, W106, and W115 each carry the tryptophan amide modification. The propeptide occupies 118 to 123; that stretch reads SADPGQ. A tryptophan amide mark is found at W127 and W137. A propeptide spanning residues 140-164 is cleaved from the precursor; sequence SYEPPQFEDLEDLKKKSAIPKPSEQ.

The protein belongs to the LWamide neuropeptide family.

The protein localises to the secreted. Functionally, metamorphosin A may be part of an internal signaling system involved in control of metamorphosis. The sequence is that of LWamide neuropeptides from Actinia equina (Beadlet anemone).